We begin with the raw amino-acid sequence, 337 residues long: UDP-3-O-acylglucosamine N-acyltransferase (337 aa).

The active-site Proton acceptor is His-238.

Belongs to the transferase hexapeptide repeat family. LpxD subfamily. Homotrimer.

The catalysed reaction is a UDP-3-O-[(3R)-3-hydroxyacyl]-alpha-D-glucosamine + a (3R)-hydroxyacyl-[ACP] = a UDP-2-N,3-O-bis[(3R)-3-hydroxyacyl]-alpha-D-glucosamine + holo-[ACP] + H(+). Its pathway is bacterial outer membrane biogenesis; LPS lipid A biosynthesis. Its function is as follows. Catalyzes the N-acylation of UDP-3-O-acylglucosamine using 3-hydroxyacyl-ACP as the acyl donor. Is involved in the biosynthesis of lipid A, a phosphorylated glycolipid that anchors the lipopolysaccharide to the outer membrane of the cell. The protein is UDP-3-O-acylglucosamine N-acyltransferase of Xanthomonas axonopodis pv. citri (strain 306).